The chain runs to 1047 residues: Cation efflux system protein CusA (1047 aa).

The next 12 helical transmembrane spans lie at 14-34 (FLVLMGALFLSIWGTWTIINT), 338-358 (LSGKLLEEFIVVAVVCALFLW), 363-383 (ALVAIISLPLGLCIAFIVMHF), 391-411 (MSLGGIAIAVGAMVDAAIVMI), 446-466 (VGPALFISLLIITLSFIPIFT), 485-505 (AMAGAALLAIVVIPILMGYWI), 532-552 (VLHWPKTTLLVAALSVLTVLW), 871-891 (KLKLMVPMTLMIIFVLLYLAF), 898-918 (LLIISSVPFALVGGIWLLWWM), 928-948 (TGFIALAGVAAEFGVVMLMYL), 985-1005 (AMTVAVIIAGLLPILWGTGAG), and 1012-1032 (IAAPMIGGMITAPLLSLFIIP).

It belongs to the resistance-nodulation-cell division (RND) (TC 2.A.6) family. In terms of assembly, the cus efflux system is composed of CusA, CusB, CusC and CusF.

It is found in the cell inner membrane. Part of a cation efflux system that mediates resistance to copper and silver. This Escherichia coli (strain K12) protein is Cation efflux system protein CusA (cusA).